The chain runs to 342 residues: Holliday junction branch migration complex subunit RuvB (342 aa).

Positions 1–181 (MEERFLTPKD…FGMVLELEFY (181 aa)) are large ATPase domain (RuvB-L). ATP contacts are provided by residues L20, R21, G62, K65, T66, T67, 128–130 (EDF), R171, Y181, and R218. T66 provides a ligand contact to Mg(2+). Residues 182–252 (TPDELKQIIK…TVEDAMKIMG (71 aa)) are small ATPAse domain (RuvB-S). A head domain (RuvB-H) region spans residues 255–342 (AEGLDDMDRK…IGPLWDSTGD (88 aa)). DNA-binding residues include R310 and R315.

It belongs to the RuvB family. As to quaternary structure, homohexamer. Forms an RuvA(8)-RuvB(12)-Holliday junction (HJ) complex. HJ DNA is sandwiched between 2 RuvA tetramers; dsDNA enters through RuvA and exits via RuvB. An RuvB hexamer assembles on each DNA strand where it exits the tetramer. Each RuvB hexamer is contacted by two RuvA subunits (via domain III) on 2 adjacent RuvB subunits; this complex drives branch migration. In the full resolvosome a probable DNA-RuvA(4)-RuvB(12)-RuvC(2) complex forms which resolves the HJ.

It localises to the cytoplasm. It catalyses the reaction ATP + H2O = ADP + phosphate + H(+). Its function is as follows. The RuvA-RuvB-RuvC complex processes Holliday junction (HJ) DNA during genetic recombination and DNA repair, while the RuvA-RuvB complex plays an important role in the rescue of blocked DNA replication forks via replication fork reversal (RFR). RuvA specifically binds to HJ cruciform DNA, conferring on it an open structure. The RuvB hexamer acts as an ATP-dependent pump, pulling dsDNA into and through the RuvAB complex. RuvB forms 2 homohexamers on either side of HJ DNA bound by 1 or 2 RuvA tetramers; 4 subunits per hexamer contact DNA at a time. Coordinated motions by a converter formed by DNA-disengaged RuvB subunits stimulates ATP hydrolysis and nucleotide exchange. Immobilization of the converter enables RuvB to convert the ATP-contained energy into a lever motion, pulling 2 nucleotides of DNA out of the RuvA tetramer per ATP hydrolyzed, thus driving DNA branch migration. The RuvB motors rotate together with the DNA substrate, which together with the progressing nucleotide cycle form the mechanistic basis for DNA recombination by continuous HJ branch migration. Branch migration allows RuvC to scan DNA until it finds its consensus sequence, where it cleaves and resolves cruciform DNA. The protein is Holliday junction branch migration complex subunit RuvB of Kosmotoga olearia (strain ATCC BAA-1733 / DSM 21960 / TBF 19.5.1).